Here is a 444-residue protein sequence, read N- to C-terminus: Tubulin beta chain (444 aa).

Gln-11, Glu-69, Ser-138, Gly-142, Thr-143, Gly-144, Asn-204, and Asn-226 together coordinate GTP. Residue Glu-69 coordinates Mg(2+).

The protein belongs to the tubulin family. As to quaternary structure, dimer of alpha and beta chains. A typical microtubule is a hollow water-filled tube with an outer diameter of 25 nm and an inner diameter of 15 nM. Alpha-beta heterodimers associate head-to-tail to form protofilaments running lengthwise along the microtubule wall with the beta-tubulin subunit facing the microtubule plus end conferring a structural polarity. Microtubules usually have 13 protofilaments but different protofilament numbers can be found in some organisms and specialized cells. Mg(2+) is required as a cofactor.

It localises to the cytoplasm. The protein resides in the cytoskeleton. Functionally, tubulin is the major constituent of microtubules, a cylinder consisting of laterally associated linear protofilaments composed of alpha- and beta-tubulin heterodimers. Microtubules grow by the addition of GTP-tubulin dimers to the microtubule end, where a stabilizing cap forms. Below the cap, tubulin dimers are in GDP-bound state, owing to GTPase activity of alpha-tubulin. This Trichuris trichiura (Whipworm) protein is Tubulin beta chain.